The primary structure comprises 408 residues: MQATTAAAAAQLLTDTRRGPRCSRARLGATRLSWPGRFAVEAFAGRCQSSATTVTHRFSAISQATSPRRKARRQCSDDQSALQAGCSKVNRDQHGYDVNWFEEISQEVSKKLRAFYQFCRPHTIFGTIIGITSVSLLPMKSIDDFTATVLKGYLEALAAALCMNIYVVGLNQLYDIQIDKINKPGLPLAAGEFSVATGVFLVVTFLIMSFSIGIHSGSVPLMYALVVSFLLGSAYSIEAPLLRWKRHALLAASCILFVRAILVQLAFFAHMQQHVLKRPLAATKSLVFATLFMCCFSAVIALFKDIPDVDGDRDFGIQSLSVRLGPQRVYQLCISILLTAYLAATVVGASSTHLLQKIITVSGHGLLALTLWQRARHLEVENQARVTSFYMFIWKLFYAEYFLIPFVQ.

The transit peptide at 1 to 68 directs the protein to the chloroplast; that stretch reads MQATTAAAAA…SAISQATSPR (68 aa). The next 9 helical transmembrane spans lie at 122–142, 149–169, 194–214, 217–237, 248–268, 286–306, 329–349, 352–372, and 386–406; these read HTIFGTIIGITSVSLLPMKSI, VLKGYLEALAAALCMNIYVVG, SVATGVFLVVTFLIMSFSIGI, GSVPLMYALVVSFLLGSAYSI, ALLAASCILFVRAILVQLAFF, LVFATLFMCCFSAVIALFKDI, VYQLCISILLTAYLAATVVGA, THLLQKIITVSGHGLLALTLW, and VTSFYMFIWKLFYAEYFLIPF.

This sequence belongs to the UbiA prenyltransferase family.

It localises to the plastid. The protein resides in the chloroplast membrane. The enzyme catalyses homogentisate + (2E,6E,10E)-geranylgeranyl diphosphate + H(+) = 6-geranylgeranyl-2-methylbenzene-1,4-diol + CO2 + diphosphate. The protein operates within cofactor biosynthesis; tocopherol biosynthesis. Its function is as follows. Involved in the synthesis of tocotrienol (vitamin E). Catalyzes the condensation of homogentisate and geranylgeranyl diphosphate to form 2-methyl-6-geranylgeranylbenzoquinol. Possesses low activity with phytyl diphosphate as substrate. This chain is Homogentisate geranylgeranyltransferase, found in Triticum aestivum (Wheat).